The sequence spans 302 residues: Dioxygenase olcK (302 aa).

The Fe cation site is built by H136, D138, and H213.

This sequence belongs to the PhyH family. Homodimer. Fe cation is required as a cofactor.

It localises to the peroxisome matrix. The protein operates within secondary metabolite biosynthesis; terpenoid biosynthesis. In terms of biological role, dioxygenase; part of the gene cluster that mediates the biosynthesis of 15-deoxyoxalicine B. The first step of the pathway is the synthesis of nicotinyl-CoA from nicotinic acid by the nicotinic acid-CoA ligase olcI. Nicotinyl-CoA is then a substrate of polyketide synthase olcA to produce 4-hydroxy-6-(3-pyridinyl)-2H-pyran-2-one (HPPO) which is further prenylated by the polyprenyl transferase olcH to yield geranylgeranyl-HPPO. Geranylgeranyl pyrophosphate is provided by the cluster-specific geranylgeranyl pyrophosphate synthase olcC. The FAD-dependent monooxygenase olcE catalyzes the epoxidation of geranylgeranyl-HPPO and the terpene cyclase olcD catalyzes the cyclization of the terpenoid component, resulting in the formation of the tricyclic terpene moiety seen in predecaturin E. The cytochrome P450 monooxygenase then catalyzes the allylic oxidation of predecaturin E, which is followed by spirocylization with concomitant loss of one molecule of water to form decaturin E. Decaturin E is the substrate of the cytochrome P450 monooxygenase olcJ which hydroxylates it at the C-29 position to form decaturin F. The short-chain dehydrogenase/reductase olcF may catalyze the oxidation of decaturin F to generate the 29-hydroxyl-27-one intermediate, and subsequent hemiacetal formation probably leads to the formation of decaturin C. The dioxygenase olcK may be a peroxisomal enzyme that catalyzes the hydroxylation of decaturin C into decaturin A once decaturin C is shuttled into the peroxisome by the MFS transporter olcL. Finally the cytochrome P450 monooxygenase olcB catalyzes the oxidative rearrangement to yield 15-deoxyoxalicine B. In the absence of olcJ, decaturin E may be shunted to a pathway in which it is oxidized to a ketone, possibly by olcF, to form decaturin D, which undergoes further allylic oxidation to yield decaturin G. Moreover, in the absence of oclK or oclL, oclB can convert decaturin C into 15-deoxyoxalicine A. The chain is Dioxygenase olcK from Penicillium canescens.